A 161-amino-acid polypeptide reads, in one-letter code: Crossover junction endodeoxyribonuclease RuvC (161 aa).

Residues Asp-7, Glu-67, and Asp-139 contribute to the active site. The Mg(2+) site is built by Asp-7, Glu-67, and Asp-139.

This sequence belongs to the RuvC family. In terms of assembly, homodimer which binds Holliday junction (HJ) DNA. The HJ becomes 2-fold symmetrical on binding to RuvC with unstacked arms; it has a different conformation from HJ DNA in complex with RuvA. In the full resolvosome a probable DNA-RuvA(4)-RuvB(12)-RuvC(2) complex forms which resolves the HJ. It depends on Mg(2+) as a cofactor.

The protein localises to the cytoplasm. The enzyme catalyses Endonucleolytic cleavage at a junction such as a reciprocal single-stranded crossover between two homologous DNA duplexes (Holliday junction).. The RuvA-RuvB-RuvC complex processes Holliday junction (HJ) DNA during genetic recombination and DNA repair. Endonuclease that resolves HJ intermediates. Cleaves cruciform DNA by making single-stranded nicks across the HJ at symmetrical positions within the homologous arms, yielding a 5'-phosphate and a 3'-hydroxyl group; requires a central core of homology in the junction. The consensus cleavage sequence is 5'-(A/T)TT(C/G)-3'. Cleavage occurs on the 3'-side of the TT dinucleotide at the point of strand exchange. HJ branch migration catalyzed by RuvA-RuvB allows RuvC to scan DNA until it finds its consensus sequence, where it cleaves and resolves the cruciform DNA. The protein is Crossover junction endodeoxyribonuclease RuvC of Syntrophotalea carbinolica (strain DSM 2380 / NBRC 103641 / GraBd1) (Pelobacter carbinolicus).